Here is a 696-residue protein sequence, read N- to C-terminus: MELGSCFKTYEDFKECFSAYKRENRCSFILRDCVSVRFHNLNHGTSIREDILYVQVKFVCIRTQSNRKRTREADMCPAYLLLRYNERLDRLFISELNTQHIHGDSKVASPGGDTTGKSQKTMCLQRLQPVQPTTKKDLDTAEKSLVEPSFCLDKVQVSSKPEQEGITPSDLAKIAKVMKNFLKVDEGSMASFSVGDSQHLDRLSFQSSKMTDLFIRFPENLLLHRVENTQGHILYAFLVENKERESRVVHFAVLKAETVTSVAKMLSIFTEFNSDWPKVKVVFVDPSFHYRAILQEIFPAARILLSIYHTTRLLEKKLHRSSANPSFKRLMKEALREAVFVTSEASLKNLCQMSQAVLDEDLFNFLQAHWFTCELLWYMHVRKGLLACNTYMDSLDIVTSKVSSLFREQQSLLDCILCFVDYIDFFNTKGLKNLPTPPPKLKRARPASMPLKSKKAFGICGESLTSLPAEETKPDAQQVQVQQQSQVPPSQVGMLDTLHQSGSELAYKLCHNEWEVVQNSTHLVDMAGSSVDVQLLEDSHQVSKDGCSCSCSFQQWYHLPCRHILALLHTSQQPVGEAMVCRRWQKKYQYLLGPNGELQDRGMVPNTGQPEKQGRNDMIQDLSRELANLLMQTEGPELEERYSTLRKIVDIWAGPSQPSELFQQPGDFKDVGRLPFLWGKQEEGEGFPPATAVMHY.

An SWIM-type zinc finger spans residues 531-572 (VDVQLLEDSHQVSKDGCSCSCSFQQWYHLPCRHILALLHTSQ).

The protein is Zinc finger SWIM domain-containing protein 3 (ZSWIM3) of Homo sapiens (Human).